Consider the following 579-residue polypeptide: Fatty-acid amide hydrolase 1 (579 aa).

A helical membrane pass occupies residues 9-29 (TLSGVSGVCLACSLLSAAVVL). The Cytoplasmic portion of the chain corresponds to 30-403 (RWTGRQKARG…GDFVDPCLGD (374 aa)). The active-site Charge relay system is Lys-142. Substrate-binding positions include Met-191, Ser-217, and 238–241 (IGGS). Ser-217 functions as the Charge relay system in the catalytic mechanism. The active-site Acyl-ester intermediate is Ser-241. Ser-241 is subject to Phosphoserine. An intramembrane segment occupies 404 to 433 (LILILRLPSWFKRLLSLLLKPLFPRLAAFL). Over 434-579 (NSMRPRSAEK…QLMTPQKQPS (146 aa)) the chain is Cytoplasmic.

The protein belongs to the amidase family. Homodimer. In terms of tissue distribution, found in neuronal cells throughout the CNS. Expressed in liver and brain, and to a lesser extent in spleen, lung, kidney and testes.

The protein resides in the endoplasmic reticulum membrane. It is found in the golgi apparatus membrane. The enzyme catalyses N-(5Z,8Z,11Z,14Z-eicosatetraenoyl)-ethanolamine + H2O = ethanolamine + (5Z,8Z,11Z,14Z)-eicosatetraenoate. The catalysed reaction is (9Z)-octadecenamide + H2O = (9Z)-octadecenoate + NH4(+). It carries out the reaction 2-(5Z,8Z,11Z,14Z-eicosatetraenoyl)-glycerol + H2O = glycerol + (5Z,8Z,11Z,14Z)-eicosatetraenoate + H(+). It catalyses the reaction (9Z,12Z,15Z)-octadecatrienamide + H2O = (9Z,12Z,15Z)-octadecatrienoate + NH4(+). The enzyme catalyses (5Z,8Z,11Z,14Z)-eicosatetraenamide + H2O = (5Z,8Z,11Z,14Z)-eicosatetraenoate + NH4(+). The catalysed reaction is (6Z)-octadecenamide + H2O = (6Z)-octadecenoate + NH4(+). It carries out the reaction (15Z)-tetracosenamide + H2O = (15Z)-tetracosenoate + NH4(+). It catalyses the reaction (8Z,11Z,14Z)-eicosatrienamide + H2O = (8Z,11Z,14Z)-eicosatrienoate + NH4(+). The enzyme catalyses (11Z,14Z,17Z)-eicosatrienamide + H2O = (11Z,14Z,17Z)-eicosatrienoate + NH4(+). The catalysed reaction is (11Z,14Z)-eicosadienamide + H2O = (11Z,14Z)-eicosadienoate + NH4(+). It carries out the reaction (9Z,12Z)-octadecadienamide + H2O = (9Z,12Z)-octadecadienoate + NH4(+). It catalyses the reaction tetradecamide + H2O = tetradecanoate + NH4(+). The enzyme catalyses N-(9Z-octadecenoyl) ethanolamine + H2O = ethanolamine + (9Z)-octadecenoate. The catalysed reaction is N-(9Z-octadecenoyl)-taurine + H2O = taurine + (9Z)-octadecenoate. It carries out the reaction 1-O-methyl-(5Z,8Z,11Z,14Z)-eicosatetraenoate + H2O = methanol + (5Z,8Z,11Z,14Z)-eicosatetraenoate + H(+). It catalyses the reaction (11Z)-eicosenamide + H2O = (11Z)-eicosenoate + NH4(+). The enzyme catalyses N-(9Z-hexadecenoyl) ethanolamine + H2O = (9Z)-hexadecenoate + ethanolamine. The catalysed reaction is N-octadecanoyl ethanolamine + H2O = octadecanoate + ethanolamine. It carries out the reaction N-docosanoyl-ethanolamine + H2O = docosanoate + ethanolamine. It catalyses the reaction N-tetracosanoyl-taurine + H2O = tetracosanoate + taurine. The enzyme catalyses N-(15Z-tetracosenoyl)-ethanolamine + H2O = (15Z)-tetracosenoate + ethanolamine. The catalysed reaction is N-docosanoyl-taurine + H2O = docosanoate + taurine. It carries out the reaction N-(15Z-tetracosenoyl)-taurine + H2O = (15Z)-tetracosenoate + taurine. It catalyses the reaction N-tricosanoyl-taurine + H2O = tricosanoate + taurine. The enzyme catalyses (9Z)-octadecenoate + glycine = N-(9Z-octadecenoyl)glycine + H2O. The catalysed reaction is N-(5Z,8Z,11Z,14Z)-eicosatetraenoyl-glycine + H2O = (5Z,8Z,11Z,14Z)-eicosatetraenoate + glycine. It carries out the reaction N-(5Z,8Z,11Z,14Z-eicosatetraenoyl)-L-serine + H2O = (5Z,8Z,11Z,14Z)-eicosatetraenoate + L-serine. Its activity is regulated as follows. inhibited by trifluoromethyl ketone. Functionally, catalyzes the hydrolysis of endogenous amidated lipids like the sleep-inducing lipid oleamide ((9Z)-octadecenamide), the endocannabinoid anandamide (N-(5Z,8Z,11Z,14Z-eicosatetraenoyl)-ethanolamine), as well as other fatty amides, to their corresponding fatty acids, thereby regulating the signaling functions of these molecules. Hydrolyzes polyunsaturated substrate anandamide preferentially as compared to monounsaturated substrates. It can also catalyze the hydrolysis of the endocannabinoid 2-arachidonoylglycerol (2-(5Z,8Z,11Z,14Z-eicosatetraenoyl)-glycerol). FAAH cooperates with PM20D1 in the hydrolysis of amino acid-conjugated fatty acids such as N-fatty acyl glycine and N-fatty acyl-L-serine, thereby acting as a physiological regulator of specific subsets of intracellular, but not of extracellular, N-fatty acyl amino acids. The sequence is that of Fatty-acid amide hydrolase 1 (Faah) from Rattus norvegicus (Rat).